The primary structure comprises 305 residues: Ribosomal RNA small subunit methyltransferase H (305 aa).

S-adenosyl-L-methionine contacts are provided by residues 30–32, aspartate 49, phenylalanine 74, aspartate 96, and glutamine 103; that span reads GGH.

Belongs to the methyltransferase superfamily. RsmH family.

The protein localises to the cytoplasm. The catalysed reaction is cytidine(1402) in 16S rRNA + S-adenosyl-L-methionine = N(4)-methylcytidine(1402) in 16S rRNA + S-adenosyl-L-homocysteine + H(+). Functionally, specifically methylates the N4 position of cytidine in position 1402 (C1402) of 16S rRNA. The protein is Ribosomal RNA small subunit methyltransferase H of Francisella tularensis subsp. holarctica (strain LVS).